Here is a 302-residue protein sequence, read N- to C-terminus: Urease accessory protein UreD 2 (302 aa).

Belongs to the UreD family. UreD, UreF and UreG form a complex that acts as a GTP-hydrolysis-dependent molecular chaperone, activating the urease apoprotein by helping to assemble the nickel containing metallocenter of UreC. The UreE protein probably delivers the nickel.

The protein localises to the cytoplasm. In terms of biological role, required for maturation of urease via the functional incorporation of the urease nickel metallocenter. The sequence is that of Urease accessory protein UreD 2 from Brucella ovis (strain ATCC 25840 / 63/290 / NCTC 10512).